The following is a 263-amino-acid chain: Putative SNAP25 homologous protein SNAP30 (263 aa).

2 disordered regions span residues 1–61 and 132–209; these read MFGF…LQSQ and NLGG…DGLS. Composition is skewed to polar residues over residues 8–34 and 52–61; these read PGNN…TSSE and FNDSGGLQSQ. A compositionally biased stretch (basic and acidic residues) spans 158–173; sequence KPSKKSENHKEEREKL. The segment covering 180–194 has biased composition (polar residues); sequence RSSSQPALDQPTNAL. Residues 197 to 206 show a composition bias toward basic and acidic residues; it reads VEQEKAKQDD. Positions 198–260 constitute a t-SNARE coiled-coil homology domain; that stretch reads EQEKAKQDDG…QGANQRARHL (63 aa).

It belongs to the SNAP-25 family.

Its subcellular location is the membrane. It localises to the cytoplasm. Functionally, vesicle trafficking protein that functions in the secretory pathway. The chain is Putative SNAP25 homologous protein SNAP30 (SNAP30) from Arabidopsis thaliana (Mouse-ear cress).